Consider the following 134-residue polypeptide: Small ribosomal subunit protein uS8 (134 aa).

The protein belongs to the universal ribosomal protein uS8 family. Part of the 30S ribosomal subunit. Contacts proteins S5 and S12.

Functionally, one of the primary rRNA binding proteins, it binds directly to 16S rRNA central domain where it helps coordinate assembly of the platform of the 30S subunit. The polypeptide is Small ribosomal subunit protein uS8 (Petrotoga mobilis (strain DSM 10674 / SJ95)).